We begin with the raw amino-acid sequence, 195 residues long: Imidazoleglycerol-phosphate dehydratase (195 aa).

The protein belongs to the imidazoleglycerol-phosphate dehydratase family.

The protein localises to the cytoplasm. It catalyses the reaction D-erythro-1-(imidazol-4-yl)glycerol 3-phosphate = 3-(imidazol-4-yl)-2-oxopropyl phosphate + H2O. It participates in amino-acid biosynthesis; L-histidine biosynthesis; L-histidine from 5-phospho-alpha-D-ribose 1-diphosphate: step 6/9. This Exiguobacterium sp. (strain ATCC BAA-1283 / AT1b) protein is Imidazoleglycerol-phosphate dehydratase.